Here is a 214-residue protein sequence, read N- to C-terminus: Redox-sensing transcriptional repressor Rex (214 aa).

The H-T-H motif DNA-binding region spans 17 to 56 (LYYRIFKRFYADQVEKASSKQIADAMGIDSATVRRDFSYF). 91–96 (GCGNIG) contacts NAD(+).

It belongs to the transcriptional regulatory Rex family. Homodimer.

It localises to the cytoplasm. Its function is as follows. Modulates transcription in response to changes in cellular NADH/NAD(+) redox state. The chain is Redox-sensing transcriptional repressor Rex from Streptococcus equi subsp. zooepidemicus (strain H70).